Here is a 510-residue protein sequence, read N- to C-terminus: ATP synthase subunit alpha (510 aa).

Gly-169 to Thr-176 lines the ATP pocket.

The protein belongs to the ATPase alpha/beta chains family. F-type ATPases have 2 components, CF(1) - the catalytic core - and CF(0) - the membrane proton channel. CF(1) has five subunits: alpha(3), beta(3), gamma(1), delta(1), epsilon(1). CF(0) has four main subunits: a(1), b(1), b'(1) and c(9-12).

The protein localises to the cell inner membrane. The catalysed reaction is ATP + H2O + 4 H(+)(in) = ADP + phosphate + 5 H(+)(out). In terms of biological role, produces ATP from ADP in the presence of a proton gradient across the membrane. The alpha chain is a regulatory subunit. This is ATP synthase subunit alpha from Rhodopseudomonas palustris (strain ATCC BAA-98 / CGA009).